A 124-amino-acid chain; its full sequence is Small ribosomal subunit protein uS13 (124 aa).

The segment at 95-124 is disordered; that stretch reads GLPVRGQRTKTNARTRKGPKRTIAGKKKAK.

It belongs to the universal ribosomal protein uS13 family. As to quaternary structure, part of the 30S ribosomal subunit. Forms a loose heterodimer with protein S19. Forms two bridges to the 50S subunit in the 70S ribosome.

Located at the top of the head of the 30S subunit, it contacts several helices of the 16S rRNA. In the 70S ribosome it contacts the 23S rRNA (bridge B1a) and protein L5 of the 50S subunit (bridge B1b), connecting the 2 subunits; these bridges are implicated in subunit movement. Contacts the tRNAs in the A and P-sites. This is Small ribosomal subunit protein uS13 from Rhodococcus erythropolis (strain PR4 / NBRC 100887).